Here is a 319-residue protein sequence, read N- to C-terminus: uncharacterized protein (319 aa).

Residues 21-70 (ETETLKNSTDEVQTSSSFSSSGGRQSSPLTSGSKLEREKQTPSLEQGDTQ) form a disordered region. Residues 25–34 (LKNSTDEVQT) show a composition bias toward polar residues. Residues 35 to 51 (SSSFSSSGGRQSSPLTS) are compositionally biased toward low complexity. Positions 61–70 (TPSLEQGDTQ) are enriched in polar residues.

This is an uncharacterized protein from Homo sapiens (Human).